The chain runs to 30 residues: Protamine-YII (30 aa).

The disordered stretch occupies residues Pro1–Arg30.

Testis.

The protein resides in the nucleus. It is found in the chromosome. Its function is as follows. Protamines substitute for histones in the chromatin of sperm during the haploid phase of spermatogenesis. They compact sperm DNA into a highly condensed, stable and inactive complex. In Clupea harengus (Atlantic herring), this protein is Protamine-YII.